The primary structure comprises 264 residues: Tryptophan synthase alpha chain (264 aa).

Catalysis depends on proton acceptor residues Glu45 and Asp56.

The protein belongs to the TrpA family. As to quaternary structure, tetramer of two alpha and two beta chains.

The enzyme catalyses (1S,2R)-1-C-(indol-3-yl)glycerol 3-phosphate + L-serine = D-glyceraldehyde 3-phosphate + L-tryptophan + H2O. It functions in the pathway amino-acid biosynthesis; L-tryptophan biosynthesis; L-tryptophan from chorismate: step 5/5. Its function is as follows. The alpha subunit is responsible for the aldol cleavage of indoleglycerol phosphate to indole and glyceraldehyde 3-phosphate. This chain is Tryptophan synthase alpha chain, found in Leptospira borgpetersenii serovar Hardjo-bovis (strain JB197).